Consider the following 428-residue polypeptide: Trigger factor (428 aa).

A PPIase FKBP-type domain is found at 163–248 (GDTAVIDFEG…INEVKAKELP (86 aa)).

Belongs to the FKBP-type PPIase family. Tig subfamily.

It is found in the cytoplasm. The enzyme catalyses [protein]-peptidylproline (omega=180) = [protein]-peptidylproline (omega=0). Its function is as follows. Involved in protein export. Acts as a chaperone by maintaining the newly synthesized protein in an open conformation. Functions as a peptidyl-prolyl cis-trans isomerase. The chain is Trigger factor from Oceanobacillus iheyensis (strain DSM 14371 / CIP 107618 / JCM 11309 / KCTC 3954 / HTE831).